We begin with the raw amino-acid sequence, 749 residues long: Cytosolic phospholipase A2 (749 aa).

Residues 1–124 (MASIDPYQHI…GEKKQVPFTF (124 aa)) enclose the C2 domain. The tract at residues 1 to 178 (MASIDPYQHI…LRKLLGPEKT (178 aa)) is phospholipid binding. Residues D40, T41, D43, N65, D93, A94, and N95 each coordinate Ca(2+). Positions 138–740 (VCSSTDLRFS…NDVEARKLLH (603 aa)) constitute a PLA2c domain. S229 functions as the Nucleophile in the catalytic mechanism. The disordered stretch occupies residues 417 to 458 (MEEEIENLKPKHILGNDSSDSDDEMQEPKGTENSKAEEEYQR). The segment covering 442–457 (QEPKGTENSKAEEEYQ) has biased composition (basic and acidic residues). D549 serves as the catalytic Proton acceptor.

It localises to the cytoplasm. The protein resides in the cytoplasmic vesicle. It catalyses the reaction a 1,2-diacyl-sn-glycero-3-phosphocholine + H2O = a 1-acyl-sn-glycero-3-phosphocholine + a fatty acid + H(+). The catalysed reaction is a 1-acyl-sn-glycero-3-phosphocholine + H2O = sn-glycerol 3-phosphocholine + a fatty acid + H(+). Stimulated by agonists such as ATP, EGF, thrombin and bradykinin as well as by cytosolic Ca(2+). Its function is as follows. Selectively hydrolyzes arachidonyl phospholipids in the sn-2 position releasing arachidonic acid. Together with its lysophospholipid activity, it is implicated in the initiation of the inflammatory response. The polypeptide is Cytosolic phospholipase A2 (pla2g4a) (Xenopus tropicalis (Western clawed frog)).